A 139-amino-acid chain; its full sequence is Small ribosomal subunit protein eS12 (139 aa).

This sequence belongs to the eukaryotic ribosomal protein eS12 family. Subunit of the 40S ribosomal complex. Part of the small subunit (SSU) processome, composed of more than 70 proteins and the RNA chaperone small nucleolar RNA (snoRNA) U3.

It localises to the nucleus. The protein localises to the nucleolus. Subunit of the 40S ribosomal complex. Part of the small subunit (SSU) processome, first precursor of the small eukaryotic ribosomal subunit. During the assembly of the SSU processome in the nucleolus, many ribosome biogenesis factors, an RNA chaperone and ribosomal proteins associate with the nascent pre-rRNA and work in concert to generate RNA folding, modifications, rearrangements and cleavage as well as targeted degradation of pre-ribosomal RNA by the RNA exosome. In wing imaginal disks, might have a role in translation rate, growth and cell competition, probably through regulation of Xrp1 expression. Might have a role in development and longevity. This Drosophila melanogaster (Fruit fly) protein is Small ribosomal subunit protein eS12.